A 313-amino-acid polypeptide reads, in one-letter code: D-apiose import binding protein (313 aa).

Residues 1–26 form the signal peptide; sequence MKLTRRLTLAAFASVLALGTAAPAFS. D-apiofuranose is bound by residues asparagine 39, 115–116, 162–164, arginine 168, asparagine 218, aspartate 243, and glutamine 263; these read DR and DTN.

This sequence belongs to the bacterial solute-binding protein 2 family.

It localises to the periplasm. Its function is as follows. Part of an ABC transporter complex involved in D-apiose import. This Rhizobium rhizogenes (strain K84 / ATCC BAA-868) (Agrobacterium radiobacter) protein is D-apiose import binding protein.